Here is a 349-residue protein sequence, read N- to C-terminus: N-formyl peptide receptor 3 (349 aa).

The Extracellular portion of the chain corresponds to Met1–Ile27. Asn4 and Asn10 each carry an N-linked (GlcNAc...) asparagine glycan. Residues Phe28–Val50 traverse the membrane as a helical segment. Residues Ala51–Thr61 lie on the Cytoplasmic side of the membrane. Residues Ile62–Val83 form a helical membrane-spanning segment. The Extracellular portion of the chain corresponds to Ser84–Leu100. An intrachain disulfide couples Cys98 to Cys176. A helical membrane pass occupies residues Val101 to Leu121. Residues Asp122–Ser140 lie on the Cytoplasmic side of the membrane. Residues Leu141–Ile162 form a helical membrane-spanning segment. The Extracellular portion of the chain corresponds to Phe163–His205. Residues Phe206–Ala226 traverse the membrane as a helical segment. Over Lys227 to Val242 the chain is Cytoplasmic. The chain crosses the membrane as a helical span at residues Phe243–Val266. The Extracellular portion of the chain corresponds to Trp267–Pro286. A helical membrane pass occupies residues Thr287–Gly306. Residues Arg307–Glu349 lie on the Cytoplasmic side of the membrane. A disordered region spans residues Glu327 to Glu349. Residues Ser331–Ser343 are compositionally biased toward polar residues.

Belongs to the G-protein coupled receptor 1 family.

Its subcellular location is the cell membrane. In terms of biological role, low affinity receptor for N-formyl-methionyl peptides, which are powerful neutrophils chemotactic factors. Binding of FMLP to the receptor causes activation of neutrophils. This response is mediated via a G-protein that activates a phosphatidylinositol-calcium second messenger system. This Pan troglodytes (Chimpanzee) protein is N-formyl peptide receptor 3 (FPR3).